A 301-amino-acid polypeptide reads, in one-letter code: Probable 5-dehydro-4-deoxyglucarate dehydratase (301 aa).

The protein belongs to the DapA family.

It carries out the reaction 5-dehydro-4-deoxy-D-glucarate + H(+) = 2,5-dioxopentanoate + CO2 + H2O. Its pathway is carbohydrate acid metabolism; D-glucarate degradation; 2,5-dioxopentanoate from D-glucarate: step 2/2. In Xanthobacter autotrophicus (strain ATCC BAA-1158 / Py2), this protein is Probable 5-dehydro-4-deoxyglucarate dehydratase.